A 324-amino-acid chain; its full sequence is tRNA dimethylallyltransferase (324 aa).

17 to 24 (GPTASGKT) contributes to the ATP binding site. 19-24 (TASGKT) contacts substrate. 4 interaction with substrate tRNA regions span residues 42–45 (DSAL), 166–170 (QRIQR), 251–256 (RCVGYR), and 284–291 (KRQITWLR).

The protein belongs to the IPP transferase family. Monomer. It depends on Mg(2+) as a cofactor.

It carries out the reaction adenosine(37) in tRNA + dimethylallyl diphosphate = N(6)-dimethylallyladenosine(37) in tRNA + diphosphate. Its function is as follows. Catalyzes the transfer of a dimethylallyl group onto the adenine at position 37 in tRNAs that read codons beginning with uridine, leading to the formation of N6-(dimethylallyl)adenosine (i(6)A). The sequence is that of tRNA dimethylallyltransferase from Burkholderia orbicola (strain AU 1054).